Here is a 67-residue protein sequence, read N- to C-terminus: MDARLLEILVCPICKGPLHYDRAAQELICNADKLAYPIRDGIPVMLVDEARQTVEGTPVDPAGPAGS.

It belongs to the UPF0434 family.

The chain is UPF0434 protein Bcep1808_2639 from Burkholderia vietnamiensis (strain G4 / LMG 22486) (Burkholderia cepacia (strain R1808)).